Reading from the N-terminus, the 198-residue chain is MSTLDELIQKARHLRSEGHSPGQIADELSLSMETVTWLLTQEKGAATPKDVHIDWTAVSGESQLLVESAQMLLSRLHLKNPEGPVPQVYVGIAISGIPLATLMAVTEGVRIGIYHPAKHAGGDEPIGSMSGNFDIHAGERIVVVDDVITSGKTLQEVINYIKRHGAVPVACCVLFDKRGIRDIDGVPVYSLFKVSRID.

It belongs to the purine/pyrimidine phosphoribosyltransferase family. GfcR subfamily.

This is Transcriptional regulator GfcR from Methanospirillum hungatei JF-1 (strain ATCC 27890 / DSM 864 / NBRC 100397 / JF-1).